Reading from the N-terminus, the 244-residue chain is 1-(5-phosphoribosyl)-5-[(5-phosphoribosylamino)methylideneamino] imidazole-4-carboxamide isomerase (244 aa).

Asp-10 functions as the Proton acceptor in the catalytic mechanism. The active-site Proton donor is Asp-132.

The protein belongs to the HisA/HisF family.

Its subcellular location is the cytoplasm. It catalyses the reaction 1-(5-phospho-beta-D-ribosyl)-5-[(5-phospho-beta-D-ribosylamino)methylideneamino]imidazole-4-carboxamide = 5-[(5-phospho-1-deoxy-D-ribulos-1-ylimino)methylamino]-1-(5-phospho-beta-D-ribosyl)imidazole-4-carboxamide. It functions in the pathway amino-acid biosynthesis; L-histidine biosynthesis; L-histidine from 5-phospho-alpha-D-ribose 1-diphosphate: step 4/9. In Xanthomonas campestris pv. campestris (strain 8004), this protein is 1-(5-phosphoribosyl)-5-[(5-phosphoribosylamino)methylideneamino] imidazole-4-carboxamide isomerase.